Consider the following 411-residue polypeptide: Arginine deiminase (411 aa).

The active-site Amidino-cysteine intermediate is the cysteine 401.

Belongs to the arginine deiminase family.

The protein localises to the cytoplasm. The enzyme catalyses L-arginine + H2O = L-citrulline + NH4(+). It participates in amino-acid degradation; L-arginine degradation via ADI pathway; carbamoyl phosphate from L-arginine: step 1/2. The polypeptide is Arginine deiminase (Staphylococcus aureus (strain bovine RF122 / ET3-1)).